The following is a 1010-amino-acid chain: Peroxisome proliferator-activated receptor gamma coactivator 1-beta (1010 aa).

The tract at residues 1-91 is abolishes DNA transcriptional activity when missing; sequence MAGNDCGALL…FFQIDSENEA (91 aa). A disordered region spans residues 115–134; that stretch reads GLDEGDTPSCTPASPAPLSV. An LXXLL motif 1 motif is present at residues 140 to 144; the sequence is LERLL. Ser-145 and Ser-148 each carry phosphoserine. The short motif at 156-160 is the LXXLL motif 2 element; the sequence is LQKLL. Disordered stretches follow at residues 165-214, 227-282, and 306-329; these read SPTA…RPCT, PRGK…QVPK, and PQRA…PRSR. 2 stretches are compositionally biased toward polar residues: residues 178-189 and 264-279; these read TWSQTSLSSRSQ and PQDS…NSAQ. The LXXLL motif 3 motif lies at 342–346; it reads LRELL. The segment covering 369–384 has biased composition (polar residues); the sequence is TPQSRTRPPKDSQASP. Disordered regions lie at residues 369-475, 517-567, and 590-674; these read TPQS…VCPV, GLTD…CLML, and GTAG…QKRP. The residue at position 383 (Ser-383) is a Phosphoserine. Residues 411–428 are compositionally biased toward basic and acidic residues; it reads LRLEVKRDVNKPARQKRE. Residues 429–449 show a composition bias toward acidic residues; the sequence is EDEEEEEEEEEEEEKEDEEEE. Positions 521 to 532 are enriched in low complexity; it reads SSQGQQLPLGSQ. A compositionally biased stretch (basic and acidic residues) spans 604–618; that stretch reads PMEEDPFKQDTKHSP. Polar residues-rich tracts occupy residues 619–638 and 659–670; these read GQDT…TATP and QHATTQPVSQAG. Ser-628 bears the Phosphoserine mark. The HCFC1-binding-motif (HBM) signature appears at 681 to 684; the sequence is DHDY. Disordered stretches follow at residues 714 to 744 and 778 to 881; these read HQGA…SMQL and DTVF…KKRR. The span at 782–794 shows a compositional bias: low complexity; that stretch reads EDSSSSSGESSFL. Over residues 795–811 the composition is skewed to acidic residues; sequence LEEEEEEGGEEDDEGED. Residues 832–852 are compositionally biased toward low complexity; that stretch reads SRQLCSRSRSSSGSSSCSSWS. Residues 889 to 963 enclose the RRM domain; that stretch reads RVVYIRNLSG…RNEPSFHLSY (75 aa).

In terms of assembly, interacts with estrogen receptor alpha/ESR1. Interacts with Sterol regulatory binding transcription factor 1/SREBF1, PPAR-alpha/PPARA, thyroid hormone receptor beta/THRB and host cell factor/HCFC1. Interacts with Estrogen-related receptor gamma/ESRRG and alpha/ESRRA. Interacts with PRDM16. As to expression, ubiquitous with higher expression in heart, brown adipose tissue.

It is found in the nucleus. In terms of biological role, plays a role of stimulator of transcription factors and nuclear receptors activities. Activates transcriptional activity of estrogen receptor alpha, nuclear respiratory factor 1 (NRF1) and glucocorticoid receptor in the presence of glucocorticoids. May play a role in constitutive non-adrenergic-mediated mitochondrial biogenesis as suggested by increased basal oxygen consumption and mitochondrial number when overexpressed. May be part of the pathways regulating the elevation of gluconeogenesis, beta-oxidation of fatty acids and ketogenesis during fasting. Stimulates SREBP-mediated lipogenic gene expression in the liver. Induces energy expenditure and antagonizes obesity when overexpressed. Also induces the expression of mitochondrial genes involved in oxidative metabolism. Induces the expression of PERM1 in the skeletal muscle in an ESRRA-dependent manner. The sequence is that of Peroxisome proliferator-activated receptor gamma coactivator 1-beta (Ppargc1b) from Rattus norvegicus (Rat).